A 321-amino-acid chain; its full sequence is Holliday junction branch migration complex subunit RuvB (321 aa).

Positions 1–173 are large ATPase domain (RuvB-L); the sequence is MMMEQECVDD…FGIISRLEFY (173 aa). ATP is bound by residues Ile-12, Arg-13, Gly-54, Lys-57, Thr-58, Thr-59, 120 to 122, Arg-163, Tyr-173, and Arg-210; that span reads EDF. Thr-58 contacts Mg(2+). Positions 174–244 are small ATPAse domain (RuvB-S); the sequence is TPAELACIVK…LASDALARMD (71 aa). A head domain (RuvB-H) region spans residues 247–321; it reads ELGLDQMDRK…KAYRHMNLLA (75 aa). Positions 302 and 307 each coordinate DNA.

This sequence belongs to the RuvB family. Homohexamer. Forms an RuvA(8)-RuvB(12)-Holliday junction (HJ) complex. HJ DNA is sandwiched between 2 RuvA tetramers; dsDNA enters through RuvA and exits via RuvB. An RuvB hexamer assembles on each DNA strand where it exits the tetramer. Each RuvB hexamer is contacted by two RuvA subunits (via domain III) on 2 adjacent RuvB subunits; this complex drives branch migration. In the full resolvosome a probable DNA-RuvA(4)-RuvB(12)-RuvC(2) complex forms which resolves the HJ.

The protein resides in the cytoplasm. It carries out the reaction ATP + H2O = ADP + phosphate + H(+). In terms of biological role, the RuvA-RuvB-RuvC complex processes Holliday junction (HJ) DNA during genetic recombination and DNA repair, while the RuvA-RuvB complex plays an important role in the rescue of blocked DNA replication forks via replication fork reversal (RFR). RuvA specifically binds to HJ cruciform DNA, conferring on it an open structure. The RuvB hexamer acts as an ATP-dependent pump, pulling dsDNA into and through the RuvAB complex. RuvB forms 2 homohexamers on either side of HJ DNA bound by 1 or 2 RuvA tetramers; 4 subunits per hexamer contact DNA at a time. Coordinated motions by a converter formed by DNA-disengaged RuvB subunits stimulates ATP hydrolysis and nucleotide exchange. Immobilization of the converter enables RuvB to convert the ATP-contained energy into a lever motion, pulling 2 nucleotides of DNA out of the RuvA tetramer per ATP hydrolyzed, thus driving DNA branch migration. The RuvB motors rotate together with the DNA substrate, which together with the progressing nucleotide cycle form the mechanistic basis for DNA recombination by continuous HJ branch migration. Branch migration allows RuvC to scan DNA until it finds its consensus sequence, where it cleaves and resolves cruciform DNA. This Oleidesulfovibrio alaskensis (strain ATCC BAA-1058 / DSM 17464 / G20) (Desulfovibrio alaskensis) protein is Holliday junction branch migration complex subunit RuvB.